The chain runs to 160 residues: 6,7-dimethyl-8-ribityllumazine synthase (160 aa).

5-amino-6-(D-ribitylamino)uracil contacts are provided by residues Trp26, 59–61 (AVE), and 81–83 (VVI). (2S)-2-hydroxy-3-oxobutyl phosphate is bound at residue 86-87 (GT). The active-site Proton donor is His89. Phe114 contacts 5-amino-6-(D-ribitylamino)uracil. Residue Arg128 participates in (2S)-2-hydroxy-3-oxobutyl phosphate binding.

Belongs to the DMRL synthase family.

The catalysed reaction is (2S)-2-hydroxy-3-oxobutyl phosphate + 5-amino-6-(D-ribitylamino)uracil = 6,7-dimethyl-8-(1-D-ribityl)lumazine + phosphate + 2 H2O + H(+). It functions in the pathway cofactor biosynthesis; riboflavin biosynthesis; riboflavin from 2-hydroxy-3-oxobutyl phosphate and 5-amino-6-(D-ribitylamino)uracil: step 1/2. Its function is as follows. Catalyzes the formation of 6,7-dimethyl-8-ribityllumazine by condensation of 5-amino-6-(D-ribitylamino)uracil with 3,4-dihydroxy-2-butanone 4-phosphate. This is the penultimate step in the biosynthesis of riboflavin. The sequence is that of 6,7-dimethyl-8-ribityllumazine synthase from Frankia casuarinae (strain DSM 45818 / CECT 9043 / HFP020203 / CcI3).